We begin with the raw amino-acid sequence, 232 residues long: MITQLQDYLAKTYGIHFNNPALLAEAFTQASYVNEHPHENLKYYERIEFLGDAVLQLFVSEYIYRRYPELPQGKLTRLRAAMVCEDSFSKFAKECHFDQYIRLGKGEEMAGARNRASLLCDIFESFIGALYLDQGRQAVEQFIQTVIFPKLDLGWFDHAVDAKTSLQEFLQRNGDVAIEYDLLSEGGTENDPVFEVEVTVDGKKVATGQGSSKKHAEMEAAKHALEKLRMDK.

Residues 6–135 (QDYLAKTYGI…FIGALYLDQG (130 aa)) form the RNase III domain. Residue Glu-48 coordinates Mg(2+). The active site involves Asp-52. Positions 121 and 124 each coordinate Mg(2+). The active site involves Glu-124. The DRBM domain maps to 161 to 230 (DAKTSLQEFL…AKHALEKLRM (70 aa)).

The protein belongs to the ribonuclease III family. Homodimer. Mg(2+) serves as cofactor.

It localises to the cytoplasm. It catalyses the reaction Endonucleolytic cleavage to 5'-phosphomonoester.. Functionally, digests double-stranded RNA. Involved in the processing of primary rRNA transcript to yield the immediate precursors to the large and small rRNAs (23S and 16S). Processes some mRNAs, and tRNAs when they are encoded in the rRNA operon. Processes pre-crRNA and tracrRNA of type II CRISPR loci if present in the organism. The chain is Ribonuclease 3 from Limosilactobacillus fermentum (strain NBRC 3956 / LMG 18251) (Lactobacillus fermentum).